The sequence spans 412 residues: Phosphoglycerate kinase (412 aa).

Residues Val-20, Asp-21, Phe-22, Asn-23, Gln-35, Arg-36, Ser-59, His-60, Gly-62, Arg-63, Leu-118, Arg-119, His-166, and Arg-167 each coordinate (2R)-3-phosphoglycerate. Gly-210 contributes to the ADP binding site. Gly-210 lines the CDP pocket. AMP is bound by residues Ala-211 and Lys-212. ATP is bound at residue Ala-211. Position 211 (Ala-211) interacts with Mg(2+). Mg(2+) is bound by residues Ala-214 and Asp-215. A CDP-binding site is contributed by Asp-215. Lys-216 is a binding site for AMP. ATP is bound at residue Lys-216. Gly-234 contributes to the ADP binding site. Residue Gly-234 participates in CDP binding. AMP-binding residues include Gly-235 and Gly-308. 2 residues coordinate ATP: Gly-235 and Gly-308. Residues Gly-333 and Phe-338 each contribute to the CDP site. Residue Phe-338 participates in ADP binding. Glu-339 provides a ligand contact to AMP. Residues Glu-339, Asp-370, and Thr-371 each contribute to the ATP site. A Mg(2+)-binding site is contributed by Asp-370.

Belongs to the phosphoglycerate kinase family. Monomer. Mg(2+) is required as a cofactor.

Its subcellular location is the cytoplasm. It carries out the reaction (2R)-3-phosphoglycerate + ATP = (2R)-3-phospho-glyceroyl phosphate + ADP. It participates in carbohydrate degradation; glycolysis; pyruvate from D-glyceraldehyde 3-phosphate: step 2/5. Catalyzes one of the two ATP producing reactions in the glycolytic pathway via the reversible conversion of 1,3-diphosphoglycerate to 3-phosphoglycerate. In addition to its role as a glycolytic enzyme, it seems that PGK-1 acts as a polymerase alpha cofactor protein (primer recognition protein). May play a role in sperm motility. This is Phosphoglycerate kinase (PGK) from Aplysia californica (California sea hare).